A 302-amino-acid polypeptide reads, in one-letter code: Tetrahydromethanopterin S-methyltransferase subunit E (302 aa).

The next 6 membrane-spanning stretches (helical) occupy residues 3–23 (PLISMGVLALIGVAATIAGAS), 86–106 (PLFALVFGSLIAACVHATFAV), 132–152 (ITPIMGYAFITTFCILVVSYL), 155–175 (VVLGHPFPLTMLAFIWGITIG), 233–253 (PVTGLAFGMTVFLGSWITTIF), and 259–279 (LGWLSVIAGIVIVFILIIWNW).

It belongs to the MtrE family. In terms of assembly, the complex is composed of 8 subunits; MtrA, MtrB, MtrC, MtrD, MtrE, MtrF, MtrG and MtrH.

The protein resides in the cell membrane. It catalyses the reaction 5-methyl-5,6,7,8-tetrahydromethanopterin + coenzyme M + 2 Na(+)(in) = 5,6,7,8-tetrahydromethanopterin + methyl-coenzyme M + 2 Na(+)(out). Its pathway is one-carbon metabolism; methanogenesis from CO(2); methyl-coenzyme M from 5,10-methylene-5,6,7,8-tetrahydromethanopterin: step 2/2. Its function is as follows. Part of a complex that catalyzes the formation of methyl-coenzyme M and tetrahydromethanopterin from coenzyme M and methyl-tetrahydromethanopterin. This is an energy-conserving, sodium-ion translocating step. The chain is Tetrahydromethanopterin S-methyltransferase subunit E from Methanosarcina barkeri (strain Fusaro / DSM 804).